The chain runs to 171 residues: Protein-export protein SecB (171 aa).

This sequence belongs to the SecB family. In terms of assembly, homotetramer, a dimer of dimers. One homotetramer interacts with 1 SecA dimer.

It localises to the cytoplasm. Functionally, one of the proteins required for the normal export of preproteins out of the cell cytoplasm. It is a molecular chaperone that binds to a subset of precursor proteins, maintaining them in a translocation-competent state. It also specifically binds to its receptor SecA. This chain is Protein-export protein SecB, found in Jannaschia sp. (strain CCS1).